A 214-amino-acid chain; its full sequence is Large ribosomal subunit protein bL25 (214 aa).

It belongs to the bacterial ribosomal protein bL25 family. CTC subfamily. Part of the 50S ribosomal subunit; part of the 5S rRNA/L5/L18/L25 subcomplex. Contacts the 5S rRNA. Binds to the 5S rRNA independently of L5 and L18.

In terms of biological role, this is one of the proteins that binds to the 5S RNA in the ribosome where it forms part of the central protuberance. This chain is Large ribosomal subunit protein bL25, found in Polynucleobacter necessarius subsp. necessarius (strain STIR1).